Reading from the N-terminus, the 245-residue chain is Uridylate kinase (245 aa).

K13–G16 provides a ligand contact to ATP. Residue G56 coordinates UMP. G57 and R61 together coordinate ATP. UMP contacts are provided by residues D76 and T138 to T145. 3 residues coordinate ATP: N166, Y172, and D175.

This sequence belongs to the UMP kinase family. In terms of assembly, homohexamer.

The protein localises to the cytoplasm. The enzyme catalyses UMP + ATP = UDP + ADP. Its pathway is pyrimidine metabolism; CTP biosynthesis via de novo pathway; UDP from UMP (UMPK route): step 1/1. Inhibited by UTP. Catalyzes the reversible phosphorylation of UMP to UDP. In Mycoplasma mobile (strain ATCC 43663 / 163K / NCTC 11711) (Mesomycoplasma mobile), this protein is Uridylate kinase.